We begin with the raw amino-acid sequence, 326 residues long: Putative [LysW]-lysine/[LysW]-ornithine hydrolase (326 aa).

A Zn(2+)-binding site is contributed by histidine 66. Aspartate 68 is a catalytic residue. Aspartate 90 lines the Zn(2+) pocket. The active-site Proton acceptor is the glutamate 117. Residues glutamate 118, glutamate 139, and histidine 297 each coordinate Zn(2+).

This sequence belongs to the peptidase M20A family. LysK subfamily. Zn(2+) serves as cofactor. The cofactor is Co(2+).

Its subcellular location is the cytoplasm. The catalysed reaction is [amino-group carrier protein]-C-terminal-gamma-(L-lysyl)-L-glutamate + H2O = [amino-group carrier protein]-C-terminal-L-glutamate + L-lysine. It catalyses the reaction [amino-group carrier protein]-C-terminal-gamma-(L-ornithyl)-L-glutamate + H2O = [amino-group carrier protein]-C-terminal-L-glutamate + L-ornithine. It functions in the pathway amino-acid biosynthesis; L-lysine biosynthesis via AAA pathway; L-lysine from L-alpha-aminoadipate (Thermus route): step 5/5. It participates in amino-acid biosynthesis; L-arginine biosynthesis. Catalyzes the release of L-lysine from [LysW]-gamma-L-lysine and the release of L-ornithine from [LysW]-L-ornithine. The chain is Putative [LysW]-lysine/[LysW]-ornithine hydrolase from Pyrococcus furiosus (strain ATCC 43587 / DSM 3638 / JCM 8422 / Vc1).